A 1001-amino-acid chain; its full sequence is Serine/threonine-protein kinase TAO1 (1001 aa).

S9 bears the Phosphoserine mark. The Protein kinase domain occupies 28-281 (FTDLREIGHG…SEELLKHIFV (254 aa)). Residues 34 to 42 (IGHGSFGAV) and K57 each bind ATP. D151 serves as the catalytic Proton acceptor. Residues 324–433 (PAVEAQEEEE…QVSRHKSHYR (110 aa)) form a disordered region. A compositionally biased stretch (low complexity) spans 350–373 (SNQSIPSMSISASSQSSSVNSLPD). 2 stretches are compositionally biased toward basic and acidic residues: residues 375–388 (SDDKSELDMMEGDH) and 399–416 (LKPEEENYREEGDPRTRA). 2 positions are modified to phosphoserine: S421 and S445. Positions 458 to 651 (SELREQMSGY…QTQKDLEHAM (194 aa)) form a coiled coil. Positions 567-587 (KEELNENQSTPKKEKQEWLSK) are disordered. Residues 577–587 (PKKEKQEWLSK) are compositionally biased toward basic and acidic residues. T669 carries the post-translational modification Phosphothreonine. The stretch at 754–877 (KAVLKRLKEE…LERQAREIEA (124 aa)) forms a coiled coil. The interval 911–1001 (SHNPTGGPGP…ISNGSHMSYT (91 aa)) is disordered. S965 carries the phosphoserine modification. Polar residues predominate over residues 975 to 1001 (GGRTEQGMSRSTSVTSQISNGSHMSYT).

Belongs to the protein kinase superfamily. STE Ser/Thr protein kinase family. STE20 subfamily. In terms of assembly, self-associates. Interacts with MAP2K3. Interacts with SPRED1. Interacts with TESK1; the interaction inhibits TAOK1 kinase activity. Interacts with MAP3K7. Post-translationally, proteolytically processed by caspase-3 (CASP3). Autophosphorylated. Phosphorylated by ATM in response to DNA damage. Phosphorylated by LRRK2. As to expression, highly expressed in the testis, and to a lower extent also expressed in brain, placenta, colon and skeletal muscle.

It localises to the cytoplasm. The enzyme catalyses L-seryl-[protein] + ATP = O-phospho-L-seryl-[protein] + ADP + H(+). It catalyses the reaction L-threonyl-[protein] + ATP = O-phospho-L-threonyl-[protein] + ADP + H(+). Its activity is regulated as follows. Serine/threonine-protein kinase activity is inhibited by SPRED1. In terms of biological role, serine/threonine-protein kinase involved in various processes such as p38/MAPK14 stress-activated MAPK cascade, DNA damage response and regulation of cytoskeleton stability. Phosphorylates MAP2K3, MAP2K6 and MARK2. Acts as an activator of the p38/MAPK14 stress-activated MAPK cascade by mediating phosphorylation and subsequent activation of the upstream MAP2K3 and MAP2K6 kinases. Involved in G-protein coupled receptor signaling to p38/MAPK14. In response to DNA damage, involved in the G2/M transition DNA damage checkpoint by activating the p38/MAPK14 stress-activated MAPK cascade, probably by mediating phosphorylation of MAP2K3 and MAP2K6. Acts as a regulator of cytoskeleton stability by phosphorylating 'Thr-208' of MARK2, leading to activate MARK2 kinase activity and subsequent phosphorylation and detachment of MAPT/TAU from microtubules. Also acts as a regulator of apoptosis: regulates apoptotic morphological changes, including cell contraction, membrane blebbing and apoptotic bodies formation via activation of the MAPK8/JNK cascade. Plays an essential role in the regulation of neuronal development in the central nervous system. Also plays a role in the regulation of neuronal migration to the cortical plate. The sequence is that of Serine/threonine-protein kinase TAO1 (TAOK1) from Homo sapiens (Human).